The primary structure comprises 171 residues: MSHNLEGKKAIVAEVSSQVAKAQAIVIAEYRGLGVDQFTRLRVKARESGIYFRVIKNTFARRAVADTPFSGLAESMVGPLAYGIGSDPVATAKILHEFAKDNDRFVIKAGAMAGIVMSDKDVAALAVLPSREELLSKLLGTMQAPIAKFVRTLNEVPSKFVRGLAAVRDKK.

It belongs to the universal ribosomal protein uL10 family. As to quaternary structure, part of the ribosomal stalk of the 50S ribosomal subunit. The N-terminus interacts with L11 and the large rRNA to form the base of the stalk. The C-terminus forms an elongated spine to which L12 dimers bind in a sequential fashion forming a multimeric L10(L12)X complex.

Functionally, forms part of the ribosomal stalk, playing a central role in the interaction of the ribosome with GTP-bound translation factors. The sequence is that of Large ribosomal subunit protein uL10 from Nitrosomonas europaea (strain ATCC 19718 / CIP 103999 / KCTC 2705 / NBRC 14298).